The primary structure comprises 249 residues: UPF0696 protein C11orf68 homolog (249 aa).

The protein belongs to the UPF0696 family.

This is UPF0696 protein C11orf68 homolog from Danio rerio (Zebrafish).